A 722-amino-acid polypeptide reads, in one-letter code: BTB/POZ domain-containing protein 9 (722 aa).

Residues 46 to 112 (ADVEFIVEEE…IYSGTLLLST (67 aa)) enclose the BTB domain. One can recognise a BACK domain in the interval 151-247 (CMILDAARLY…MNLEHLLQVV (97 aa)). The stretch at 565–593 (QDKNYLKKIADMEKEREKREKEKKTAKTD) forms a coiled coil. A compositionally biased stretch (basic and acidic residues) spans 577–594 (EKEREKREKEKKTAKTDD). 2 disordered regions span residues 577-626 (EKER…VLRS) and 640-722 (PLTP…RETL). A compositionally biased stretch (polar residues) spans 597–606 (IASTSGSSLA). Residues 607-626 (SGHAESPSTSSSSSQSVLRS) are compositionally biased toward low complexity. Pro residues predominate over residues 641–658 (LTPPALSPPGTPALPAPL). Residues 670 to 679 (EQNQPSNISA) are compositionally biased toward polar residues. Residues 686–704 (SPSSRSNPSPSLSRSRSQS) show a composition bias toward low complexity.

In terms of tissue distribution, detected in the brain (at protein level).

It localises to the cytoplasm. Functionally, essential for the homeostatic regulation of sleep and motor activity, by depressing hyperactivity and wakefulness. May function, at least in part, by ensuring dopamine biosynthesis. The sequence is that of BTB/POZ domain-containing protein 9 from Drosophila melanogaster (Fruit fly).